The chain runs to 227 residues: PKHD-type hydroxylase Reut_B4660 (227 aa).

Positions 78–178 (KVFPPLFNRY…RVSSFFWIQS (101 aa)) constitute a Fe2OG dioxygenase domain. Residues His-96, Asp-98, and His-159 each contribute to the Fe cation site. Arg-169 contacts 2-oxoglutarate.

It depends on Fe(2+) as a cofactor. L-ascorbate serves as cofactor.

This chain is PKHD-type hydroxylase Reut_B4660, found in Cupriavidus pinatubonensis (strain JMP 134 / LMG 1197) (Cupriavidus necator (strain JMP 134)).